The primary structure comprises 160 residues: MTDQQAEARSYLSEEMIAEFKAAFDMFDADGGGDISVKELGTVMRMLGQTPTKEELDAIIEEVDEDGSGTIDFEEFLVMMVRQMKEDAKGKSEEELAECFRIFDRNADGYIDAEELAEIFRASGEHVTDEEIESLMKDGDKNNDGRIDFDEFLKMMEGVQ.

Threonine 2 bears the N-acetylthreonine mark. 4 consecutive EF-hand domains span residues 15 to 50 (EMIAEFKAAFDMFDADGGGDISVKELGTVMRMLGQT), 51 to 86 (PTKEELDAIIEEVDEDGSGTIDFEEFLVMMVRQMKE), 91 to 126 (KSEEELAECFRIFDRNADGYIDAEELAEIFRASGEH), and 127 to 160 (VTDEEIESLMKDGDKNNDGRIDFDEFLKMMEGVQ). Residues aspartate 28, aspartate 30, aspartate 34, glutamate 39, aspartate 64, aspartate 66, serine 68, threonine 70, glutamate 75, aspartate 104, asparagine 106, aspartate 108, tyrosine 110, glutamate 115, aspartate 140, asparagine 142, aspartate 144, arginine 146, and glutamate 151 each coordinate Ca(2+).

It belongs to the troponin C family.

In terms of biological role, troponin is the central regulatory protein of striated muscle contraction. Tn consists of three components: Tn-I which is the inhibitor of actomyosin ATPase, Tn-T which contains the binding site for tropomyosin and Tn-C. The binding of calcium to Tn-C abolishes the inhibitory action of Tn on actin filaments. The chain is Troponin C, skeletal muscle (TNNC2) from Oryctolagus cuniculus (Rabbit).